Consider the following 707-residue polypeptide: Anti-sigma-I factor RsgI9 (707 aa).

The Cytoplasmic segment spans residues 1 to 149; the sequence is MKITGVIVRI…NFSRISNIKN (149 aa). In terms of domain architecture, RsgI N-terminal anti-sigma spans 3-50; sequence ITGVIVRIHKDRAIIRTDDNRLLAVKRHNDMMVGQIVSFDANEVHKVE. Residues 150-172 form a helical membrane-spanning segment; that stretch reads FSRIASIAAAFVLIFLFGRNVML. Topologically, residues 173–707 are extracellular; that stretch reads NNSSDSEYAY…DSEEKKEYIQ (535 aa). Residues 256–283 are a coiled coil; that stretch reads NDKNKKTRDKREEKIDELKETIEQGIEA. Residues 345–392 are disordered; that stretch reads EDNTELAPTPTPVPPETPEPTPTPTASEATPSNSPVESKSPEAVPELG. A compositionally biased stretch (pro residues) spans 353–367; that stretch reads TPTPVPPETPEPTPT. The span at 368 to 379 shows a compositional bias: low complexity; that stretch reads PTASEATPSNSP.

It is found in the cell membrane. The protein is Anti-sigma-I factor RsgI9 of Acetivibrio thermocellus (strain ATCC 27405 / DSM 1237 / JCM 9322 / NBRC 103400 / NCIMB 10682 / NRRL B-4536 / VPI 7372) (Clostridium thermocellum).